An 840-amino-acid chain; its full sequence is Protein translocase subunit SecA (840 aa).

Residues Q89, 107 to 111, and D514 contribute to the ATP site; that span reads GEGKT.

Belongs to the SecA family. As to quaternary structure, monomer and homodimer. Part of the essential Sec protein translocation apparatus which comprises SecA, SecYEG and auxiliary proteins SecDF-YajC and YidC.

The protein localises to the cell inner membrane. The protein resides in the cytoplasm. It carries out the reaction ATP + H2O + cellular proteinSide 1 = ADP + phosphate + cellular proteinSide 2.. Part of the Sec protein translocase complex. Interacts with the SecYEG preprotein conducting channel. Has a central role in coupling the hydrolysis of ATP to the transfer of proteins into and across the cell membrane, serving as an ATP-driven molecular motor driving the stepwise translocation of polypeptide chains across the membrane. This Blochmanniella floridana protein is Protein translocase subunit SecA.